Here is a 218-residue protein sequence, read N- to C-terminus: Guanylate kinase (218 aa).

One can recognise a Guanylate kinase-like domain in the interval 17-196; it reads GVLLALSSPS…ALEKLNEILH (180 aa). An ATP-binding site is contributed by 24-31; it reads SPSGAGKT.

The protein belongs to the guanylate kinase family.

Its subcellular location is the cytoplasm. It catalyses the reaction GMP + ATP = GDP + ADP. Its function is as follows. Essential for recycling GMP and indirectly, cGMP. The chain is Guanylate kinase from Maricaulis maris (strain MCS10) (Caulobacter maris).